The sequence spans 626 residues: Threonine--tRNA ligase (626 aa).

Positions 1–145 are editing domain; sequence MRMLLIHSDY…SRTIVPEKAV (145 aa). The segment at 207–506 is catalytic; the sequence is PHVRLMLEQE…QEKGIKPMYP (300 aa). Zn(2+) contacts are provided by Cys299, His351, and His475.

The protein belongs to the class-II aminoacyl-tRNA synthetase family. In terms of assembly, homodimer. Zn(2+) is required as a cofactor.

Its subcellular location is the cytoplasm. It catalyses the reaction tRNA(Thr) + L-threonine + ATP = L-threonyl-tRNA(Thr) + AMP + diphosphate + H(+). Its function is as follows. Catalyzes the attachment of threonine to tRNA(Thr) in a two-step reaction: L-threonine is first activated by ATP to form Thr-AMP and then transferred to the acceptor end of tRNA(Thr). Also edits incorrectly charged L-seryl-tRNA(Thr). The chain is Threonine--tRNA ligase from Thermococcus kodakarensis (strain ATCC BAA-918 / JCM 12380 / KOD1) (Pyrococcus kodakaraensis (strain KOD1)).